A 280-amino-acid polypeptide reads, in one-letter code: Eukaryotic translation initiation factor 3 subunit F-1 (280 aa).

Positions 8–138 (VRVHPVVLFQ…LRAYVCIQLG (131 aa)) constitute an MPN domain.

Belongs to the eIF-3 subunit F family. Component of the eukaryotic translation initiation factor 3 (eIF-3) complex. The eIF-3 complex interacts with pix.

It localises to the cytoplasm. Functionally, component of the eukaryotic translation initiation factor 3 (eIF-3) complex, which is involved in protein synthesis of a specialized repertoire of mRNAs and, together with other initiation factors, stimulates binding of mRNA and methionyl-tRNAi to the 40S ribosome. The eIF-3 complex specifically targets and initiates translation of a subset of mRNAs involved in cell proliferation. This Drosophila willistoni (Fruit fly) protein is Eukaryotic translation initiation factor 3 subunit F-1.